Consider the following 374-residue polypeptide: Chaperone protein DnaJ (374 aa).

The 66-residue stretch at 5–70 (DYYEVLGVER…SKRAAFDQYG (66 aa)) folds into the J domain. The segment at 133 to 211 (GTTVSIRVPT…CHGEGRVEEY (79 aa)) adopts a CR-type zinc-finger fold. Cysteine 146, cysteine 149, cysteine 163, cysteine 166, cysteine 185, cysteine 188, cysteine 199, and cysteine 202 together coordinate Zn(2+). CXXCXGXG motif repeat units lie at residues 146–153 (CQPCDGSG), 163–170 (CPTCGGIG), 185–192 (CPRCHGQG), and 199–206 (CTSCHGEG).

This sequence belongs to the DnaJ family. In terms of assembly, homodimer. The cofactor is Zn(2+).

It is found in the cytoplasm. In terms of biological role, participates actively in the response to hyperosmotic and heat shock by preventing the aggregation of stress-denatured proteins and by disaggregating proteins, also in an autonomous, DnaK-independent fashion. Unfolded proteins bind initially to DnaJ; upon interaction with the DnaJ-bound protein, DnaK hydrolyzes its bound ATP, resulting in the formation of a stable complex. GrpE releases ADP from DnaK; ATP binding to DnaK triggers the release of the substrate protein, thus completing the reaction cycle. Several rounds of ATP-dependent interactions between DnaJ, DnaK and GrpE are required for fully efficient folding. Also involved, together with DnaK and GrpE, in the DNA replication of plasmids through activation of initiation proteins. The sequence is that of Chaperone protein DnaJ from Pseudomonas putida (strain GB-1).